The chain runs to 159 residues: Endoribonuclease YbeY (159 aa).

Residues histidine 125, histidine 129, and histidine 135 each coordinate Zn(2+).

The protein belongs to the endoribonuclease YbeY family. Zn(2+) is required as a cofactor.

Its subcellular location is the cytoplasm. Functionally, single strand-specific metallo-endoribonuclease involved in late-stage 70S ribosome quality control and in maturation of the 3' terminus of the 16S rRNA. The protein is Endoribonuclease YbeY of Limosilactobacillus reuteri (strain DSM 20016) (Lactobacillus reuteri).